A 2078-amino-acid chain; its full sequence is Autophagy-related protein 2 homolog B (2078 aa).

Residues 13 to 108 form the Chorein N-terminal domain; that stretch reads ACRYLLQRYL…EMVFRPRPRP (96 aa). A phosphoserine mark is found at Ser-255 and Ser-379. Residues 473 to 495 are disordered; it reads GSTFPSNLVHPTPLQKTSLPSRS. Positions 486 to 495 are enriched in polar residues; sequence LQKTSLPSRS. A phosphoserine mark is found at Ser-497, Ser-840, Ser-886, Ser-899, and Ser-1008. The interval 868 to 888 is disordered; that stretch reads EEEENDGHYQEEEEGGAHSLK. Over residues 873–888 the composition is skewed to basic and acidic residues; sequence DGHYQEEEEGGAHSLK. Tyr-1012 carries the post-translational modification Phosphotyrosine. 2 positions are modified to phosphoserine: Ser-1016 and Ser-1018. Thr-1022 is subject to Phosphothreonine. The disordered stretch occupies residues 1375-1405; the sequence is ADMKPGAFQRRSKVDSSGRSSSRGPVLPEAD. Ser-1526 bears the Phosphoserine mark.

Belongs to the ATG2 family. In terms of assembly, interacts with WDR45/WIPI4.

The protein resides in the preautophagosomal structure membrane. The protein localises to the lipid droplet. It is found in the endoplasmic reticulum membrane. The catalysed reaction is a 1,2-diacyl-sn-glycero-3-phospho-L-serine(in) = a 1,2-diacyl-sn-glycero-3-phospho-L-serine(out). It carries out the reaction a 1,2-diacyl-sn-glycero-3-phosphoethanolamine(in) = a 1,2-diacyl-sn-glycero-3-phosphoethanolamine(out). Functionally, lipid transfer protein required for both autophagosome formation and regulation of lipid droplet morphology and dispersion. Tethers the edge of the isolation membrane (IM) to the endoplasmic reticulum (ER) and mediates direct lipid transfer from ER to IM for IM expansion. Binds to the ER exit site (ERES), which is the membrane source for autophagosome formation, and extracts phospholipids from the membrane source and transfers them to ATG9 (ATG9A or ATG9B) to the IM for membrane expansion. Lipid transfer activity is enhanced by WDR45/WIPI4, which promotes ATG2B-association with phosphatidylinositol 3-monophosphate (PI3P)-containing membranes. The polypeptide is Autophagy-related protein 2 homolog B (Homo sapiens (Human)).